The chain runs to 168 residues: MPRSQINGNFIDKTFSIVANILLRIIPTTSGEKEAFTYYRDGMSAQSEGNYAEALQNYYEATRLEIDPYDRSYILYNIGLIHTSNGEHTKALEYYFRALERNPFLPQAFNNMAVICHYRGEQAIRQGDSEIAEAWSDQAAEYWKQAISLTPGNYIEAHNWLKITGRFE.

TPR repeat units lie at residues 35 to 68 (AFTY…EIDP), 72 to 105 (SYIL…NPFL), and 120 to 153 (GEQA…TPGN).

The protein belongs to the Ycf3 family.

It localises to the plastid. It is found in the chloroplast thylakoid membrane. Functionally, essential for the assembly of the photosystem I (PSI) complex. May act as a chaperone-like factor to guide the assembly of the PSI subunits. This chain is Photosystem I assembly protein Ycf3, found in Piper cenocladum (Ant piper).